The sequence spans 93 residues: Integration host factor subunit beta (93 aa).

The tract at residues 59 to 93 (RVGRNPKTGQSVSLDGKFVPHFKPGKELRDRVNDD) is disordered. Residues 82–93 (PGKELRDRVNDD) show a composition bias toward basic and acidic residues.

Belongs to the bacterial histone-like protein family. As to quaternary structure, heterodimer of an alpha and a beta chain.

In terms of biological role, this protein is one of the two subunits of integration host factor, a specific DNA-binding protein that functions in genetic recombination as well as in transcriptional and translational control. The chain is Integration host factor subunit beta from Stutzerimonas stutzeri (strain A1501) (Pseudomonas stutzeri).